The following is a 527-amino-acid chain: Light-independent protochlorophyllide reductase subunit B (527 aa).

Residue D36 coordinates [4Fe-4S] cluster. D292 functions as the Proton donor in the catalytic mechanism. 428-429 contacts substrate; sequence GL.

The protein belongs to the ChlB/BchB/BchZ family. In terms of assembly, protochlorophyllide reductase is composed of three subunits; BchL, BchN and BchB. Forms a heterotetramer of two BchB and two BchN subunits. The cofactor is [4Fe-4S] cluster.

It carries out the reaction chlorophyllide a + oxidized 2[4Fe-4S]-[ferredoxin] + 2 ADP + 2 phosphate = protochlorophyllide a + reduced 2[4Fe-4S]-[ferredoxin] + 2 ATP + 2 H2O. It participates in porphyrin-containing compound metabolism; bacteriochlorophyll biosynthesis (light-independent). Its function is as follows. Component of the dark-operative protochlorophyllide reductase (DPOR) that uses Mg-ATP and reduced ferredoxin to reduce ring D of protochlorophyllide (Pchlide) to form chlorophyllide a (Chlide). This reaction is light-independent. The NB-protein (BchN-BchB) is the catalytic component of the complex. The polypeptide is Light-independent protochlorophyllide reductase subunit B (Chlorobium phaeovibrioides (strain DSM 265 / 1930) (Prosthecochloris vibrioformis (strain DSM 265))).